The sequence spans 365 residues: 2-aminoethylphosphonate--pyruvate transaminase (365 aa).

Lys-194 carries the post-translational modification N6-(pyridoxal phosphate)lysine.

Belongs to the class-V pyridoxal-phosphate-dependent aminotransferase family. PhnW subfamily. In terms of assembly, homodimer. Requires pyridoxal 5'-phosphate as cofactor.

The catalysed reaction is (2-aminoethyl)phosphonate + pyruvate = phosphonoacetaldehyde + L-alanine. In terms of biological role, involved in phosphonate degradation. The sequence is that of 2-aminoethylphosphonate--pyruvate transaminase from Bacillus cereus (strain ATCC 10987 / NRS 248).